Here is a 391-residue protein sequence, read N- to C-terminus: Leucine-rich repeat-containing protein 74B (391 aa).

Residues 1–38 (MKGPCEVQKNEDQEGEAAATGPQAETLEAERSWTADSH) form a disordered region. A compositionally biased stretch (basic and acidic residues) spans 28 to 38 (EAERSWTADSH). LRR repeat units follow at residues 106–126 (YIKR…EALA), 134–154 (IISD…QAIC), 162–182 (TVEK…QHLA), 190–211 (GLKS…ILGP), 218–239 (GLTE…AFAR), 246–259 (FLKV…GFGD), 274–294 (VLEE…LKLG), 302–323 (TLRI…GLLK), and 332–354 (ALEL…ASSM). Positions 371–391 (KDWPQASTPSQPASAPSDSGL) are disordered. Residues 374–391 (PQASTPSQPASAPSDSGL) show a composition bias toward low complexity.

The chain is Leucine-rich repeat-containing protein 74B from Mus musculus (Mouse).